A 388-amino-acid chain; its full sequence is Succinyl-diaminopimelate desuccinylase (388 aa).

His-72 provides a ligand contact to Zn(2+). Asp-74 is a catalytic residue. Asp-105 lines the Zn(2+) pocket. Residue Glu-139 is the Proton acceptor of the active site. The Zn(2+) site is built by Glu-140, Glu-168, and His-353.

It belongs to the peptidase M20A family. DapE subfamily. As to quaternary structure, homodimer. Zn(2+) serves as cofactor. It depends on Co(2+) as a cofactor.

It catalyses the reaction N-succinyl-(2S,6S)-2,6-diaminopimelate + H2O = (2S,6S)-2,6-diaminopimelate + succinate. It participates in amino-acid biosynthesis; L-lysine biosynthesis via DAP pathway; LL-2,6-diaminopimelate from (S)-tetrahydrodipicolinate (succinylase route): step 3/3. Catalyzes the hydrolysis of N-succinyl-L,L-diaminopimelic acid (SDAP), forming succinate and LL-2,6-diaminopimelate (DAP), an intermediate involved in the bacterial biosynthesis of lysine and meso-diaminopimelic acid, an essential component of bacterial cell walls. This Orientia tsutsugamushi (strain Boryong) (Rickettsia tsutsugamushi) protein is Succinyl-diaminopimelate desuccinylase.